A 239-amino-acid chain; its full sequence is Uridylate kinase (239 aa).

Position 13-16 (13-16) interacts with ATP; the sequence is KISG. Residue G55 coordinates UMP. Residues G56 and R60 each coordinate ATP. Residues D75 and 136-143 each bind UMP; that span reads LGIPFFTT. T163, Y169, and D172 together coordinate ATP.

It belongs to the UMP kinase family. Homohexamer.

It is found in the cytoplasm. The enzyme catalyses UMP + ATP = UDP + ADP. The protein operates within pyrimidine metabolism; CTP biosynthesis via de novo pathway; UDP from UMP (UMPK route): step 1/1. Its activity is regulated as follows. Inhibited by UTP. Functionally, catalyzes the reversible phosphorylation of UMP to UDP. This chain is Uridylate kinase, found in Buchnera aphidicola subsp. Cinara cedri (strain Cc).